We begin with the raw amino-acid sequence, 627 residues long: DNA topoisomerase 4 subunit B (627 aa).

ATP-binding positions include Tyr4, Asn41, Asp68, Gly109–Val115, and Lys333. A Toprim domain is found at Thr412 to Pro525. Mg(2+)-binding residues include Glu418, Asp490, and Asp492.

The protein belongs to the type II topoisomerase family. ParE type 1 subfamily. As to quaternary structure, heterotetramer composed of ParC and ParE. It depends on Mg(2+) as a cofactor. Mn(2+) serves as cofactor. Ca(2+) is required as a cofactor.

It catalyses the reaction ATP-dependent breakage, passage and rejoining of double-stranded DNA.. Pyrrolopyrimidines inhibit both GyrB and its paralog in topoisomerase IV (parE). Its function is as follows. Topoisomerase IV is essential for chromosome segregation. It relaxes supercoiled DNA. Performs the decatenation events required during the replication of a circular DNA molecule. This is DNA topoisomerase 4 subunit B from Francisella tularensis subsp. holarctica (strain LVS).